The following is a 290-amino-acid chain: MILLQQVWLPLPNRPSTSPPMSVAARSTRTLQLPPQKAFGQEASLPLAGEEDLAKRGEPDSALEELCKPLFCKLCNVTLNSAQQAQAHYQGKNHGKKLRNYYAANSCPPPARVSSVVAEPVATPLVPVPPQVGSCKPGGRVILATENDYCKLCDASFSSPAVAQAHYQGKNHAKRLRLAEAQSHSFSDSAEAGQRRTRKEGSEFKMVATRRNMNPVQSNSGPYFNARSRQRIPRDLAMCVTPSGQFYCSMCNVGAGEEVEFRQHLESKQHKSKVSEQRYRSEMENLGYVQ.

2 consecutive Matrin-type zinc fingers follow at residues 70 to 100 (LFCK…KLRN) and 148 to 178 (DYCK…RLRL). Disordered stretches follow at residues 182–203 (QSHS…EGSE) and 266–290 (ESKQ…GYVQ). The Matrin-type 3 zinc-finger motif lies at 246 to 276 (FYCSMCNVGAGEEVEFRQHLESKQHKSKVSE). Over residues 266 to 283 (ESKQHKSKVSEQRYRSEM) the composition is skewed to basic and acidic residues.

As to quaternary structure, interacts with dsRNA. In terms of tissue distribution, constitutively expressed in brain and testis. Also expressed in lung, kidney and spleen after whole body gamma irradiation.

It localises to the nucleus. It is found in the nucleolus. Functionally, acts as a bona fide target gene of p53/TP53. May play a role in the TP53-dependent growth regulatory pathway. May contribute to TP53-mediated apoptosis by regulation of TP53 expression and translocation to the nucleus and nucleolus. This chain is Zinc finger matrin-type protein 3, found in Mus musculus (Mouse).